A 178-amino-acid chain; its full sequence is Actin-related protein 2/3 complex subunit 3-B (178 aa).

This sequence belongs to the ARPC3 family. As to quaternary structure, component of the Arp2/3 complex composed of actr2/arp2, actr3/arp3, arpc1 (arpc1a or arpc1b), arpc2, arpc3, arpc4 and arpc5.

The protein localises to the cytoplasm. It localises to the cytoskeleton. It is found in the cell projection. The protein resides in the nucleus. Functionally, component of the Arp2/3 complex, a multiprotein complex that mediates actin polymerization upon stimulation by nucleation-promoting factor (NPF). The Arp2/3 complex mediates the formation of branched actin networks in the cytoplasm, providing the force for cell motility. In addition to its role in the cytoplasmic cytoskeleton, the Arp2/3 complex also promotes actin polymerization in the nucleus, thereby regulating gene transcription and repair of damaged DNA. The Arp2/3 complex promotes homologous recombination (HR) repair in response to DNA damage by promoting nuclear actin polymerization, leading to drive motility of double-strand breaks (DSBs). This Xenopus laevis (African clawed frog) protein is Actin-related protein 2/3 complex subunit 3-B (arpc3-b).